A 128-amino-acid chain; its full sequence is Azurin (128 aa).

Positions 1-128 (AECKVDVDST…SMMKGAVVLK (128 aa)) constitute a Plastocyanin-like domain. Residues cysteine 3 and cysteine 26 are joined by a disulfide bond. Cu cation-binding residues include histidine 46, cysteine 112, histidine 117, and methionine 121.

Its subcellular location is the periplasm. Its function is as follows. Transfers electrons from cytochrome c551 to cytochrome oxidase. The protein is Azurin of Pseudomonas chlororaphis (Pseudomonas aureofaciens).